The following is a 364-amino-acid chain: Protein Bop (364 aa).

The tract at residues 66–88 (STASGTCGGKPAERGPLAGHMPS) is disordered. The BH3 signature appears at 114–128 (LDRFLAQLGDYMSFH). A disordered region spans residues 258–364 (QLTKESTPGP…PGEPPLSPGF (107 aa)). Composition is skewed to pro residues over residues 311–322 (AQRPDPAHPGGP) and 355–364 (PGEPPLSPGF).

Interacts (via BH3 domain) with VDAC1. Interacts with pro-survival Bcl-2 family members, BCL2, BCL2L1 isoform Bcl-X(L), MCL1, BCL2A1 and BCL2L2. Interacts with BAX and BAK1. In terms of tissue distribution, ubiquitously expressed.

The protein resides in the mitochondrion. Could induce apoptosis in a BH3 domain-dependent manner. The direct interaction network of Bcl-2 family members may play a key role in modulation RTL10/BOP intrinsic apoptotic signaling activity. This chain is Protein Bop, found in Homo sapiens (Human).